The chain runs to 522 residues: Leucine-rich repeat transmembrane neuronal protein 1 (522 aa).

The signal sequence occupies residues 1–34 (MDFLLLGLCLYWLLRRPSGVVLCLLGACFQMLPA). The LRRNT domain maps to 35 to 63 (APSGCPQLCRCEGRLLYCEALNLTEAPHN). The Extracellular segment spans residues 35–427 (APSGCPQLCR…HAENAVQIHK (393 aa)). Asn56 and Asn63 each carry an N-linked (GlcNAc...) asparagine glycan. LRR repeat units follow at residues 64–87 (LSGL…QFTG), 89–111 (MQLT…AFQK), 112–135 (LRRV…TFRP), 137–159 (PNLR…LFHG), 161–183 (RKLT…IFQD), 184–207 (CRSL…SFAG), 209–231 (FKLT…HFPR), 233–255 (ISLH…LDWV), 256–278 (WNLE…VFET), and 279–302 (VPHL…ILNS). N-linked (GlcNAc...) asparagine glycosylation is present at Asn130. The 52-residue stretch at 314–365 (NLWDCGRNVCALASWLNNFQGRYDGNLQCASPEYAQGEDVLDAVYAFHLCED) folds into the LRRCT domain. The N-linked (GlcNAc...) asparagine glycan is linked to Asn380. The disordered stretch occupies residues 382–401 (SDLGPPASSATTLADGGEGQ). The chain crosses the membrane as a helical span at residues 428-448 (VVTGTMALIFSFLIVVLVLYV). The Cytoplasmic segment spans residues 449-522 (SWKCFPASLR…HQQPARECEV (74 aa)).

It belongs to the LRRTM family. In terms of tissue distribution, predominantly expressed in forebrain regions including thalamus and cerebral cortex.

Its subcellular location is the cell membrane. The protein resides in the postsynaptic cell membrane. Its function is as follows. Exhibits strong synaptogenic activity, restricted to excitatory presynaptic differentiation, acting at both pre- and postsynaptic level. This is Leucine-rich repeat transmembrane neuronal protein 1 (LRRTM1) from Homo sapiens (Human).